The primary structure comprises 281 residues: ATP phosphoribosyltransferase (281 aa).

It belongs to the ATP phosphoribosyltransferase family. Long subfamily. Mg(2+) serves as cofactor.

The protein resides in the cytoplasm. The enzyme catalyses 1-(5-phospho-beta-D-ribosyl)-ATP + diphosphate = 5-phospho-alpha-D-ribose 1-diphosphate + ATP. Its pathway is amino-acid biosynthesis; L-histidine biosynthesis; L-histidine from 5-phospho-alpha-D-ribose 1-diphosphate: step 1/9. With respect to regulation, feedback inhibited by histidine. In terms of biological role, catalyzes the condensation of ATP and 5-phosphoribose 1-diphosphate to form N'-(5'-phosphoribosyl)-ATP (PR-ATP). Has a crucial role in the pathway because the rate of histidine biosynthesis seems to be controlled primarily by regulation of HisG enzymatic activity. This is ATP phosphoribosyltransferase from Corynebacterium aurimucosum (strain ATCC 700975 / DSM 44827 / CIP 107346 / CN-1) (Corynebacterium nigricans).